A 257-amino-acid polypeptide reads, in one-letter code: Probable oxidoreductase yanE (257 aa).

It belongs to the oxidoreductase OpS7 family.

It functions in the pathway secondary metabolite biosynthesis; terpenoid biosynthesis. Functionally, part of the gene cluster that mediates the biosynthesis of yanuthone D, a fungal isoprenoid epoxycyclohexenone that acts as an antibiotic against fungi and bacteria. The first step of the pathway is the synthesis of 6-methylsalicylic acid (6-MSA) by the polyketide synthase yanA. 6-MSA is then converted to m-cresol by the decarboxylase yanB. The cytochrome P450 monooxygenase yanC then catalyzes the oxidation of m-cresol to toluquinol. Epoxidation of toluquinol is then performed by the short chain dehydrogenase yanD, with the help of yanE, and a further prenylation by yanG leads to 7-deacetoxyyanuthone A. The next step is the hydroxylation of C-22 of 7-deacetoxyyanuthone A by the cytochrome P450 monooxygenase yanH to yield 22-deacetylyanuthone A. O-Mevalon transferase yanI then attaches mevalon to the hydroxyl group of 22-deacetylyanuthone A to produce yanuthone E. Finally, the FAD-dependent monooxygenase yanF oxidizes the hydroxyl group at C15 of yanuthone E to form yanuthone D. Furthermore, several branching points in the pathway lead to the production of yanuthones F and G from 7-deacetoxyyanuthone A; yanuthones H and I from 22-deacetylyanuthone A; and yanuthone J from yanuthone E. YanE is also involved in the synthesis of yanuthone X1 which does not have 6-methylsalicylic acid (6-MSA) as precursor. The sequence is that of Probable oxidoreductase yanE from Aspergillus niger (strain ATCC 1015 / CBS 113.46 / FGSC A1144 / LSHB Ac4 / NCTC 3858a / NRRL 328 / USDA 3528.7).